Consider the following 686-residue polypeptide: Delta-like protein 4 (686 aa).

Residues 1-27 (MTPGSRSACRWALLLLAVLWPQQRAAG) form the signal peptide. Topologically, residues 28–530 (SGIFQLRLQE…PVGLPPSFPW (503 aa)) are extracellular. 2 disulfides stabilise this stretch: C51-C55 and C62-C75. Residues N79, N109, and N162 are each glycosylated (N-linked (GlcNAc...) asparagine). The region spanning 174-218 (VVCSDNYYGDSCSRLCKKRDDHFGHYECQPDGSLSCLPGWTGKYC) is the DSL domain. Residues C176 and C185 are joined by a disulfide bond. Interaction with Notch1 regions lie at residues 186 to 188 (SRL) and 192 to 196 (RDDHF). Cystine bridges form between C189–C201, C209–C218, C223–C234, C227–C240, C242–C251, C254–C265, C260–C271, C273–C282, C289–C301, C295–C311, C313–C322, C329–C340, C334–C349, C351–C360, C367–C378, C372–C389, C391–C400, C407–C418, C412–C427, C429–C438, C445–C456, C450–C465, C467–C476, C485–C496, C490–C507, and C509–C518. 8 EGF-like domains span residues 219 to 252 (DQPI…PLCN), 256 to 283 (PHNG…LFCD), 285 to 323 (DLNY…EHCE), 325 to 361 (ELSK…QHCE), 363 to 401 (STLT…SNCE), 403 to 439 (KVDR…THCE), 441 to 477 (HISD…RRCE), and 481 to 519 (TNDA…SRCE). A helical membrane pass occupies residues 531-551 (VAVSLGVGLVVLLVLLVMVAV). The Cytoplasmic portion of the chain corresponds to 552-686 (AVRQLRLRRP…RNECVIATEV (135 aa)).

In terms of assembly, interacts with NOTCH4. Interacts (via N-terminal DSL and MNNL domains) with NOTCH1 (via EGF-like domains).

Its subcellular location is the cell membrane. In terms of biological role, involved in the Notch signaling pathway as Notch ligand. Activates NOTCH1 and NOTCH4. Involved in angiogenesis; negatively regulates endothelial cell proliferation and migration and angiogenic sprouting. Essential for retinal progenitor proliferation. Required for suppressing rod fates in late retinal progenitors as well as for proper generation of other retinal cell types. During spinal cord neurogenesis, inhibits V2a interneuron fate. This chain is Delta-like protein 4, found in Rattus norvegicus (Rat).